Reading from the N-terminus, the 489-residue chain is Glutamyl-tRNA(Gln) amidotransferase subunit A (489 aa).

Residues Lys-80 and Ser-160 each act as charge relay system in the active site. Ser-184 functions as the Acyl-ester intermediate in the catalytic mechanism.

Belongs to the amidase family. GatA subfamily. In terms of assembly, heterotrimer of A, B and C subunits.

The enzyme catalyses L-glutamyl-tRNA(Gln) + L-glutamine + ATP + H2O = L-glutaminyl-tRNA(Gln) + L-glutamate + ADP + phosphate + H(+). Functionally, allows the formation of correctly charged Gln-tRNA(Gln) through the transamidation of misacylated Glu-tRNA(Gln) in organisms which lack glutaminyl-tRNA synthetase. The reaction takes place in the presence of glutamine and ATP through an activated gamma-phospho-Glu-tRNA(Gln). This Wolbachia sp. subsp. Drosophila simulans (strain wRi) protein is Glutamyl-tRNA(Gln) amidotransferase subunit A.